A 1125-amino-acid polypeptide reads, in one-letter code: Probable phospholipid-transporting ATPase IIB (1125 aa).

At 1 to 131 (MADGIPLNPV…IKNQKYNIVT (131 aa)) the chain is on the cytoplasmic side. The helical transmembrane segment at 132 to 152 (FVPGVLYQQFKFFLNLYFLVV) threads the bilayer. Residues 153 to 161 (ACSQFVPSL) are Extracellular-facing. Residues 162–182 (KIGYLYTYWAPLGFVLAVTMV) form a helical membrane-spanning segment. Residues 183–369 (REAVDEVRRC…LDLELNRLTK (187 aa)) are Cytoplasmic-facing. Residues 370-390 (ALFLAQVVLSVVMVALQGFLG) traverse the membrane as a helical segment. Topologically, residues 391–395 (PWFRN) are extracellular. A helical transmembrane segment spans residues 396–415 (LFRFVVLFSYIIPISLRVNL). Over 416–928 (DMGKSAYGWM…ALGQFVMHRG (513 aa)) the chain is Cytoplasmic. The active-site 4-aspartylphosphate intermediate is the Asp-455. Positions 455, 456, and 457 each coordinate ATP. A Mg(2+)-binding site is contributed by Asp-455. Thr-457 lines the Mg(2+) pocket. A compositionally biased stretch (low complexity) spans 500–511 (QSNGSSASSTPS). 2 disordered regions span residues 500-525 (QSNG…RKSV) and 552-574 (GANA…RTYQ). The span at 558-567 (ESTEADQDFS) shows a compositional bias: acidic residues. ATP-binding residues include Glu-580, Phe-622, Lys-627, Lys-646, Arg-675, Thr-676, Thr-755, Gly-756, Asp-757, Arg-837, and Lys-843. Asp-863 is a binding site for Mg(2+). 2 residues coordinate ATP: Asn-866 and Asp-867. A Mg(2+)-binding site is contributed by Asp-867. A helical transmembrane segment spans residues 929 to 949 (MIISTMQAVFSSIFYFASVPL). At 950 to 951 (YQ) the chain is on the extracellular side. The chain crosses the membrane as a helical span at residues 952 to 972 (GFLMVGYATIYTMFPVFSLVL). The Cytoplasmic portion of the chain corresponds to 973 to 1001 (DQDVKPEMALLYPELYKDLTKGRSLSFKT). A helical membrane pass occupies residues 1002 to 1022 (FLIWVLISIYQGGILMYGALV). At 1023–1030 (LFDQEFVH) the chain is on the extracellular side. The helical transmembrane segment at 1031–1051 (VVAISFTALILTELLMVALTI) threads the bilayer. At 1052–1055 (RTWH) the chain is on the cytoplasmic side. The chain crosses the membrane as a helical span at residues 1056 to 1076 (WLMVVAQLISLACYLASLAFL). At 1077 to 1088 (NEYFDLSFITTR) the chain is on the extracellular side. The helical transmembrane segment at 1089–1109 (VFLWKVCVITLVSCLPLYIIK) threads the bilayer. The Cytoplasmic segment spans residues 1110-1125 (YLKRKFSPPSYSKLSS).

This sequence belongs to the cation transport ATPase (P-type) (TC 3.A.3) family. Type IV subfamily. Mg(2+) serves as cofactor.

The protein localises to the golgi apparatus. It is found in the trans-Golgi network membrane. The enzyme catalyses ATP + H2O + phospholipidSide 1 = ADP + phosphate + phospholipidSide 2.. The polypeptide is Probable phospholipid-transporting ATPase IIB (atp9b) (Danio rerio (Zebrafish)).